Here is a 48-residue protein sequence, read N- to C-terminus: Histone H4 (48 aa).

Over residues 1 to 14 the composition is skewed to gly residues; it reads MGGKGGKGGKGLGK. Positions 1–23 are disordered; the sequence is MGGKGGKGGKGLGKVGAKKRHSR.

Belongs to the histone H4 family. In terms of assembly, the nucleosome is a histone octamer containing two molecules each of H2A, H2B, H3 and H4 assembled in one H3-H4 heterotetramer and two H2A-H2B heterodimers. The octamer wraps approximately 147 bp of DNA.

The protein resides in the nucleus. The protein localises to the chromosome. Functionally, core component of nucleosome. Nucleosomes wrap and compact DNA into chromatin, limiting DNA accessibility to the cellular machineries which require DNA as a template. Histones thereby play a central role in transcription regulation, DNA repair, DNA replication and chromosomal stability. DNA accessibility is regulated via a complex set of post-translational modifications of histones, also called histone code, and nucleosome remodeling. This chain is Histone H4, found in Blepharisma japonicum.